The following is a 261-amino-acid chain: [LysW]-aminoadipate/[LysW]-glutamate kinase (261 aa).

Substrate-binding positions include 35 to 36 (GG), Arg62, and Asn166.

It belongs to the acetylglutamate kinase family. LysZ subfamily.

Its subcellular location is the cytoplasm. The catalysed reaction is [amino-group carrier protein]-C-terminal-N-(1,4-dicarboxybutan-1-yl)-L-glutamine + ATP = [amino-group carrier protein]-C-terminal-N-(1-carboxy-5-phosphooxy-5-oxopentan-1-yl)-L-glutamine + ADP. It catalyses the reaction [amino-group carrier protein]-C-terminal-gamma-(L-glutamyl)-L-glutamate + ATP = [amino-group carrier protein]-C-terminal-gamma-(5-phospho-L-glutamyl)-L-glutamate + ADP. The protein operates within amino-acid biosynthesis; L-lysine biosynthesis via AAA pathway; L-lysine from L-alpha-aminoadipate (Thermus route): step 2/5. It participates in amino-acid biosynthesis; L-arginine biosynthesis. Functionally, involved in both the arginine and lysine biosynthetic pathways. Phosphorylates the LysW-bound precursors glutamate (for arginine biosynthesis), respectively alpha-aminoadipate (for lysine biosynthesis). This is [LysW]-aminoadipate/[LysW]-glutamate kinase from Sulfolobus acidocaldarius (strain ATCC 33909 / DSM 639 / JCM 8929 / NBRC 15157 / NCIMB 11770).